A 316-amino-acid polypeptide reads, in one-letter code: Thymidylate synthase (316 aa).

Residues Arg-23 and 178 to 179 (RR) each bind dUMP. Cys-198 serves as the catalytic Nucleophile. DUMP contacts are provided by residues 218-221 (RSAD), Asn-229, and 259-261 (HLY). Asp-221 contributes to the (6R)-5,10-methylene-5,6,7,8-tetrahydrofolate binding site. Ala-315 contributes to the (6R)-5,10-methylene-5,6,7,8-tetrahydrofolate binding site.

Belongs to the thymidylate synthase family. Bacterial-type ThyA subfamily. In terms of assembly, homodimer.

It is found in the cytoplasm. It carries out the reaction dUMP + (6R)-5,10-methylene-5,6,7,8-tetrahydrofolate = 7,8-dihydrofolate + dTMP. It functions in the pathway pyrimidine metabolism; dTTP biosynthesis. Catalyzes the reductive methylation of 2'-deoxyuridine-5'-monophosphate (dUMP) to 2'-deoxythymidine-5'-monophosphate (dTMP) while utilizing 5,10-methylenetetrahydrofolate (mTHF) as the methyl donor and reductant in the reaction, yielding dihydrofolate (DHF) as a by-product. This enzymatic reaction provides an intracellular de novo source of dTMP, an essential precursor for DNA biosynthesis. The polypeptide is Thymidylate synthase (Lacticaseibacillus casei (Lactobacillus casei)).